Consider the following 262-residue polypeptide: Aminoglycoside (3'') (9) adenylyltransferase (262 aa).

It catalyses the reaction streptomycin + ATP = 3''-O-adenylylstreptomycin + diphosphate. The catalysed reaction is spectinomycin + ATP = 9-O-adenylylspectinomycin + diphosphate. Functionally, mediates bacterial resistance to the antibiotics streptomycin and spectinomycin. The sequence is that of Aminoglycoside (3'') (9) adenylyltransferase from Shigella flexneri.